Consider the following 78-residue polypeptide: Sec-independent protein translocase protein TatA (78 aa).

Residues 1 to 21 form a helical membrane-spanning segment; the sequence is MGGISIWQLLIIAVIVVLLFG. Basic and acidic residues predominate over residues 47-59; sequence ESEKKDADFEPKS. Residues 47-78 form a disordered region; that stretch reads ESEKKDADFEPKSLEQQNKQAATESKKDKEQA. A compositionally biased stretch (polar residues) spans 60 to 69; sequence LEQQNKQAAT.

It belongs to the TatA/E family. As to quaternary structure, the Tat system comprises two distinct complexes: a TatABC complex, containing multiple copies of TatA, TatB and TatC subunits, and a separate TatA complex, containing only TatA subunits. Substrates initially bind to the TatABC complex, which probably triggers association of the separate TatA complex to form the active translocon.

It localises to the cell inner membrane. In terms of biological role, part of the twin-arginine translocation (Tat) system that transports large folded proteins containing a characteristic twin-arginine motif in their signal peptide across membranes. TatA could form the protein-conducting channel of the Tat system. This Vibrio vulnificus (strain YJ016) protein is Sec-independent protein translocase protein TatA.